A 126-amino-acid chain; its full sequence is uncharacterized protein (126 aa).

Residues 13–45 (VAPKAGREEEQPPPPAGLGCGARGEPGRGPLEH) form a disordered region.

The protein resides in the cytoplasm. The protein localises to the cytoskeleton. It is found in the cilium basal body. This is an uncharacterized protein from Homo sapiens (Human).